The chain runs to 233 residues: UPF0502 protein Mpe_A1449 (233 aa).

The protein belongs to the UPF0502 family.

The sequence is that of UPF0502 protein Mpe_A1449 from Methylibium petroleiphilum (strain ATCC BAA-1232 / LMG 22953 / PM1).